Consider the following 127-residue polypeptide: Major sperm protein 152 (127 aa).

Thr-2 bears the N-acetylthreonine mark. One can recognise an MSP domain in the interval 9 to 126 (DIQTQPGTKI…RRKNLPIEYN (118 aa)).

Sperm.

It localises to the cell projection. It is found in the pseudopodium. The protein resides in the cytoplasm. Its subcellular location is the cytoskeleton. In terms of biological role, central component in molecular interactions underlying sperm crawling. Forms an extensive filament system that extends from sperm villipoda, along the leading edge of the pseudopod. The sequence is that of Major sperm protein 152 (msp-152) from Caenorhabditis elegans.